Reading from the N-terminus, the 120-residue chain is FK506-binding protein 1A (120 aa).

The PPIase FKBP-type domain maps to 26-114; the sequence is GDNVDVHYKG…IFETELVGIK (89 aa).

This sequence belongs to the FKBP-type PPIase family. FKBP1 subfamily.

The protein localises to the cytoplasm. It carries out the reaction [protein]-peptidylproline (omega=180) = [protein]-peptidylproline (omega=0). Functionally, PPIases accelerate the folding of proteins. It catalyzes the cis-trans isomerization of proline imidic peptide bonds in oligopeptides. This is FK506-binding protein 1A (fkr-2) from Neurospora crassa (strain ATCC 24698 / 74-OR23-1A / CBS 708.71 / DSM 1257 / FGSC 987).